Reading from the N-terminus, the 257-residue chain is Flagellar brake protein YcgR 1 (257 aa).

Polar residues predominate over residues 1-18 (MDTTQSNGQTDTQGQLHA). A disordered region spans residues 1–30 (MDTTQSNGQTDTQGQLHAQTAEGGNDFGRR). The 114-residue stretch at 133 to 246 (QRREYFRVDA…AENTLQRLIT (114 aa)) folds into the PilZ domain.

The protein belongs to the YcgR family. In terms of assembly, monomer. Interacts with the flagellar basal bodies.

The protein localises to the bacterial flagellum basal body. Its function is as follows. Acts as a flagellar brake, regulating swimming and swarming in a bis-(3'-5') cyclic diguanylic acid (c-di-GMP)-dependent manner. Binds 1 c-di-GMP dimer per subunit. Increasing levels of c-di-GMP lead to decreased motility. The protein is Flagellar brake protein YcgR 1 of Paraburkholderia phytofirmans (strain DSM 17436 / LMG 22146 / PsJN) (Burkholderia phytofirmans).